The chain runs to 845 residues: Prickle-like protein 2 (845 aa).

The region spanning F18–T126 is the PET domain. The residue at position 92 (S92) is a Phosphoserine. LIM zinc-binding domains follow at residues A128 to P193, P193 to E253, and E253 to N317. Disordered regions lie at residues E314–K346 and Y483–E546. Residues G318–Q327 are compositionally biased toward polar residues. Phosphoserine occurs at positions 319, 321, and 322. T535, T537, and T540 each carry phosphothreonine. S544 and S547 each carry phosphoserine. Residues A558–G581 are disordered. Phosphoserine is present on residues S608 and S643. A disordered region spans residues Q642–L700. A compositionally biased stretch (basic residues) spans F683–R693. S732 carries the post-translational modification Phosphoserine. A disordered region spans residues S823–S845. Position 842 is a cysteine methyl ester (C842). A lipid anchor (S-farnesyl cysteine) is attached at C842. Positions I843–S845 are cleaved as a propeptide — removed in mature form.

It belongs to the prickle / espinas / testin family. As to expression, expressed in the hippocampus and cerebral cortex.

It is found in the nucleus membrane. The polypeptide is Prickle-like protein 2 (Prickle2) (Mus musculus (Mouse)).